The primary structure comprises 78 residues: D-alanyl carrier protein (78 aa).

One can recognise a Carrier domain in the interval 1–78 (MEFREQVLDL…KIVEVLEELR (78 aa)). Ser36 is subject to O-(pantetheine 4'-phosphoryl)serine.

This sequence belongs to the DltC family. 4'-phosphopantetheine is transferred from CoA to a specific serine of apo-DCP.

The protein localises to the cytoplasm. It functions in the pathway cell wall biogenesis; lipoteichoic acid biosynthesis. Carrier protein involved in the D-alanylation of lipoteichoic acid (LTA). The loading of thioester-linked D-alanine onto DltC is catalyzed by D-alanine--D-alanyl carrier protein ligase DltA. The DltC-carried D-alanyl group is further transferred to cell membrane phosphatidylglycerol (PG) by forming an ester bond, probably catalyzed by DltD. D-alanylation of LTA plays an important role in modulating the properties of the cell wall in Gram-positive bacteria, influencing the net charge of the cell wall. This chain is D-alanyl carrier protein, found in Staphylococcus xylosus.